Reading from the N-terminus, the 1579-residue chain is MAP kinase kinase kinase SSK2 (1579 aa).

Residues 1–70 are disordered; sequence MSHSDYFNYK…HSTQYFRSPN (70 aa). Residues 21–44 are compositionally biased toward low complexity; that stretch reads SSKMRQSSSSSSSRLRSESLGRNS. Residues 45–67 are compositionally biased toward polar residues; the sequence is NTTQARVASSPISPGLHSTQYFR. 4 positions are modified to phosphoserine: serine 57, serine 62, serine 78, and serine 118. 2 disordered regions span residues 97-155 and 190-243; these read FFHQ…ESEI and SIMS…GSTT. Residues 104 to 118 are compositionally biased toward low complexity; that stretch reads SGSSSSSARSSRRPS. The span at 127–139 shows a compositional bias: polar residues; it reads NPQQSLPKLSTQP. A compositionally biased stretch (basic and acidic residues) spans 144–155; that stretch reads KKVEASKTESEI. The residue at position 290 (serine 290) is a Phosphoserine. The 293-residue stretch at 1266 to 1558 folds into the Protein kinase domain; that stretch reads WQKRNFIGGG…AVELLMDPWI (293 aa). Residues 1272–1280 and lysine 1295 each bind ATP; that span reads IGGGTFGRV. Catalysis depends on aspartate 1390, which acts as the Proton acceptor. A Phosphoserine modification is found at serine 1424.

The protein belongs to the protein kinase superfamily. STE Ser/Thr protein kinase family. MAP kinase kinase kinase subfamily. In terms of assembly, interacts with by SSK1.

The catalysed reaction is L-seryl-[protein] + ATP = O-phospho-L-seryl-[protein] + ADP + H(+). The enzyme catalyses L-threonyl-[protein] + ATP = O-phospho-L-threonyl-[protein] + ADP + H(+). Its function is as follows. Kinase involved in a signal transduction pathway that is activated by changes in the osmolarity of the extracellular environment. Activates the PBS2 MAP kinase kinase by phosphorylation. The polypeptide is MAP kinase kinase kinase SSK2 (SSK2) (Saccharomyces cerevisiae (strain ATCC 204508 / S288c) (Baker's yeast)).